The primary structure comprises 130 residues: Large ribosomal subunit protein bL12 (130 aa).

The segment at 94-114 is disordered; it reads MTEGLPKTVKEKTSKSDAEDT.

It belongs to the bacterial ribosomal protein bL12 family. As to quaternary structure, homodimer. Part of the ribosomal stalk of the 50S ribosomal subunit. Forms a multimeric L10(L12)X complex, where L10 forms an elongated spine to which 2 to 4 L12 dimers bind in a sequential fashion. Binds GTP-bound translation factors.

In terms of biological role, forms part of the ribosomal stalk which helps the ribosome interact with GTP-bound translation factors. Is thus essential for accurate translation. This Chlamydia caviae (strain ATCC VR-813 / DSM 19441 / 03DC25 / GPIC) (Chlamydophila caviae) protein is Large ribosomal subunit protein bL12.